The sequence spans 510 residues: Cytochrome P450 52C2 (510 aa).

Cys-458 contributes to the heme binding site.

It belongs to the cytochrome P450 family. Heme is required as a cofactor.

It is found in the membrane. Its function is as follows. Together with an NADPH cytochrome P450 the enzyme system catalyzes the terminal hydroxylation as the first step in the assimilation of alkanes and fatty acids. The sequence is that of Cytochrome P450 52C2 (CYP52C2) from Candida maltosa (Yeast).